An 83-amino-acid chain; its full sequence is UPF0512 protein I (83 aa).

It belongs to the UPF0512 family.

This is UPF0512 protein I from Dictyostelium discoideum (Social amoeba).